A 181-amino-acid chain; its full sequence is Oligoribonuclease (181 aa).

The Exonuclease domain maps to 8-171 (LIWIDLEMTG…DDIRESVAEL (164 aa)). Y129 is an active-site residue.

The protein belongs to the oligoribonuclease family. As to quaternary structure, homodimer.

The protein localises to the cytoplasm. Functionally, 3'-to-5' exoribonuclease specific for small oligoribonucleotides. This is Oligoribonuclease from Escherichia coli O157:H7.